The sequence spans 433 residues: Trigger factor (433 aa).

Residues Gly-165–Val-250 form the PPIase FKBP-type domain.

Belongs to the FKBP-type PPIase family. Tig subfamily.

The protein localises to the cytoplasm. The catalysed reaction is [protein]-peptidylproline (omega=180) = [protein]-peptidylproline (omega=0). In terms of biological role, involved in protein export. Acts as a chaperone by maintaining the newly synthesized protein in an open conformation. Functions as a peptidyl-prolyl cis-trans isomerase. In Sulfurimonas denitrificans (strain ATCC 33889 / DSM 1251) (Thiomicrospira denitrificans (strain ATCC 33889 / DSM 1251)), this protein is Trigger factor.